Consider the following 815-residue polypeptide: Probable oligoxyloglucan-reducing end-specific xyloglucanase (815 aa).

A signal peptide spans 1-19 (MKFWLQQLGLAVLCASSAA). The Nucleophile role is filled by Asp58. Asn113 carries an N-linked (GlcNAc...) asparagine glycan. One copy of the BNR 1 repeat lies at 118–128 (FVSNDRGATFT). Asn180 is a glycosylation site (N-linked (GlcNAc...) asparagine). A BNR 2 repeat occupies 218–228 (YYTTDGGKNWE). Asn246, Asn290, and Asn304 each carry an N-linked (GlcNAc...) asparagine glycan. The BNR 3 repeat unit spans residues 351–361 (YLSRDGGKTWK). Residue Asn387 is glycosylated (N-linked (GlcNAc...) asparagine). Asp489 functions as the Proton donor in the catalytic mechanism. The BNR 4 repeat unit spans residues 545-555 (YSTDGGSEWTK). N-linked (GlcNAc...) asparagine glycans are attached at residues Asn564 and Asn603. A BNR 5 repeat occupies 649–658 (YVSTDGGLSY). Asn662 carries N-linked (GlcNAc...) asparagine glycosylation. BNR repeat units lie at residues 696–706 (YHTTDFGKRWK) and 749–759 (YRSDDNGSTWD). Asn754 is a glycosylation site (N-linked (GlcNAc...) asparagine).

The protein belongs to the glycosyl hydrolase 74 family.

The protein localises to the secreted. The enzyme catalyses Hydrolysis of cellobiose from the reducing end of xyloglucans consisting of a beta-(1-&gt;4)-linked glucan carrying alpha-D-xylosyl groups on O-6 of the glucose residues. To be a substrate, the first residue must be unsubstituted, the second residue may bear a xylosyl group, whether further glycosylated or not, and the third residue, which becomes the new terminus by the action of the enzyme, is preferably xylosylated, but this xylose residue must not be further substituted.. Oligoxyloglucan-reducing end-specific xyloglucanase involved in degradation of xyloglucans. Releases the first two glycosyl segments from oligoxyloglucans. Active against cotton xyloglucan, tamarind xyloglucan and tamarind xyloglucan oligomers. The polypeptide is Probable oligoxyloglucan-reducing end-specific xyloglucanase (xgcA) (Neosartorya fischeri (strain ATCC 1020 / DSM 3700 / CBS 544.65 / FGSC A1164 / JCM 1740 / NRRL 181 / WB 181) (Aspergillus fischerianus)).